Here is a 132-residue protein sequence, read N- to C-terminus: MDAQLEWASSLVPKRQLQQQQQQEQQQQQQQDFHKDQLMTVGMRIRQRVDQGYASRTPSTSDASLQPGVIRDYSSVIVPQFTRSPLPTANSLPPMLINQRTMSTEASSLEKWDVAEPAAEHEAMVNGSKRRL.

Disordered stretches follow at residues 1–41 (MDAQ…LMTV) and 108–132 (SLEKWDVAEPAAEHEAMVNGSKRRL). The span at 16–31 (QLQQQQQQEQQQQQQQ) shows a compositional bias: low complexity. The span at 108–123 (SLEKWDVAEPAAEHEA) shows a compositional bias: basic and acidic residues.

This sequence belongs to the DIF1/spd1 family. Interacts with RNR2 and RNR4. Phosphorylated by DUN1 in response to DNA damage which leads to its degradation.

It localises to the cytoplasm. Its subcellular location is the nucleus. Functionally, mediates the nuclear localization of RNR2 and RNR4, 2 subunits of the ribonucleotide reductase. The chain is Damage-regulated import facilitator 1 (DIF1) from Saccharomyces cerevisiae (strain JAY291) (Baker's yeast).